A 300-amino-acid polypeptide reads, in one-letter code: Cation-efflux pump FieF (300 aa).

The helical transmembrane segment at 24 to 44 threads the bilayer; the sequence is LLIKIFAWWYTGSVSILAALV. Zn(2+)-binding residues include Asp45 and Asp49. 2 helical membrane-spanning segments follow: residues 82–102 and 114–134; these read AALA…LTSI and PGVG…LVTF. Zn(2+)-binding residues include His153 and Asp157. 2 helical membrane passes run 156–176 and 178–198; these read SDVM…YGWH and ADAL…LRMG.

This sequence belongs to the cation diffusion facilitator (CDF) transporter (TC 2.A.4) family. FieF subfamily. As to quaternary structure, homodimer.

Its subcellular location is the cell inner membrane. The enzyme catalyses Zn(2+)(in) + H(+)(out) = Zn(2+)(out) + H(+)(in). The catalysed reaction is Cd(2+)(in) + H(+)(out) = Cd(2+)(out) + H(+)(in). It carries out the reaction Fe(2+)(in) + H(+)(out) = Fe(2+)(out) + H(+)(in). In terms of biological role, divalent metal cation transporter which exports Zn(2+), Cd(2+) and possibly Fe(2+). May be involved in zinc and iron detoxification by efflux. The sequence is that of Cation-efflux pump FieF from Salmonella choleraesuis (strain SC-B67).